The following is a 337-amino-acid chain: Adenylosuccinate synthetase (337 aa).

Residues 12-18 (GDEGKGK) and 42-44 (GHT) contribute to the GTP site. Aspartate 13 acts as the Proton acceptor in catalysis. Mg(2+) is bound by residues aspartate 13 and glycine 42. IMP-binding positions include 13-16 (DEGK), 40-43 (NAGH), threonine 127, arginine 141, glutamine 179, threonine 194, and arginine 256. Histidine 43 acts as the Proton donor in catalysis. A substrate-binding site is contributed by 252 to 258 (TVTGRRR). GTP-binding positions include arginine 258, 284–286 (CLD), and 324–326 (STG).

The protein belongs to the adenylosuccinate synthetase family. As to quaternary structure, homodimer. Mg(2+) serves as cofactor.

It is found in the cytoplasm. It catalyses the reaction IMP + L-aspartate + GTP = N(6)-(1,2-dicarboxyethyl)-AMP + GDP + phosphate + 2 H(+). Its pathway is purine metabolism; AMP biosynthesis via de novo pathway; AMP from IMP: step 1/2. In terms of biological role, plays an important role in the de novo pathway of purine nucleotide biosynthesis. Catalyzes the first committed step in the biosynthesis of AMP from IMP. In Methanococcus maripaludis (strain C5 / ATCC BAA-1333), this protein is Adenylosuccinate synthetase.